Consider the following 981-residue polypeptide: DNA ligase 4 (981 aa).

Glu320, Lys322, Arg327, Glu380, Phe424, Glu484, Lys489, Lys506, and Lys508 together coordinate ATP. Lys322 (N6-AMP-lysine intermediate) is an active-site residue. Glu380 contributes to the Mg(2+) binding site. Glu484 is a binding site for Mg(2+). Residues 544-563 form a disordered region; the sequence is SEKNNPSSYESGSDSDSDSE. BRCT domains follow at residues 721–819 and 875–980; these read SKAD…PKYV and ERLL…EYAA.

This sequence belongs to the ATP-dependent DNA ligase family. The cofactor is Mg(2+).

The protein resides in the nucleus. It catalyses the reaction ATP + (deoxyribonucleotide)n-3'-hydroxyl + 5'-phospho-(deoxyribonucleotide)m = (deoxyribonucleotide)n+m + AMP + diphosphate.. DNA ligase involved in DNA non-homologous end joining (NHEJ); required for double-strand break (DSB) repair. The sequence is that of DNA ligase 4 (LIG4) from Eremothecium gossypii (strain ATCC 10895 / CBS 109.51 / FGSC 9923 / NRRL Y-1056) (Yeast).